Here is a 322-residue protein sequence, read N- to C-terminus: MNWLTNVVRPKIRNILRRETPENLWIKCPDTGQLVFYKDVEQNQFVIPGSNYHMRMGALARLRSVFDNETWYDVALPEVTADPLKFRDERKYADRIKDARTKTGAHDAVKVGYGKLEGLGVVAAVQDFDFMGGSLGMAAGEAIIRGLELAVEKHAPFIMFAASGGARMQEGILSLMQMPRTTVAVQMLREAGLPYIVVLTNPTTGGVTASYAMLGDIQLAEPGALIGFAGARVIEQTIREKLPDGFQRAEYLRDHGMVDMVVHRHELRPTLARLCRILTKTPLPAVEEIAASDDAAQDAEAAAATEIVVTPPEAPSPTAPQA.

The CoA carboxyltransferase N-terminal domain maps to 24 to 293 (LWIKCPDTGQ…PAVEEIAASD (270 aa)).

It belongs to the AccD/PCCB family. As to quaternary structure, acetyl-CoA carboxylase is a heterohexamer composed of biotin carboxyl carrier protein (AccB), biotin carboxylase (AccC) and two subunits each of ACCase subunit alpha (AccA) and ACCase subunit beta (AccD).

It localises to the cytoplasm. It catalyses the reaction N(6)-carboxybiotinyl-L-lysyl-[protein] + acetyl-CoA = N(6)-biotinyl-L-lysyl-[protein] + malonyl-CoA. It participates in lipid metabolism; malonyl-CoA biosynthesis; malonyl-CoA from acetyl-CoA: step 1/1. Component of the acetyl coenzyme A carboxylase (ACC) complex. Biotin carboxylase (BC) catalyzes the carboxylation of biotin on its carrier protein (BCCP) and then the CO(2) group is transferred by the transcarboxylase to acetyl-CoA to form malonyl-CoA. In Rhodopseudomonas palustris (strain BisB5), this protein is Acetyl-coenzyme A carboxylase carboxyl transferase subunit beta.